Here is a 736-residue protein sequence, read N- to C-terminus: Catalase-peroxidase 2 (736 aa).

Residues 91–227 (WHSAGTYRMG…LAAVQMGLIY (137 aa)) constitute a cross-link (tryptophyl-tyrosyl-methioninium (Trp-Tyr) (with M-253)). Catalysis depends on His-92, which acts as the Proton acceptor. The segment at residues 227–253 (YVNPEGPDGNPDPVAAAYDIREVFGRM) is a cross-link (tryptophyl-tyrosyl-methioninium (Tyr-Met) (with W-91)). His-268 contacts heme b.

This sequence belongs to the peroxidase family. Peroxidase/catalase subfamily. Homodimer or homotetramer. Requires heme b as cofactor. Post-translationally, formation of the three residue Trp-Tyr-Met cross-link is important for the catalase, but not the peroxidase activity of the enzyme.

The catalysed reaction is H2O2 + AH2 = A + 2 H2O. The enzyme catalyses 2 H2O2 = O2 + 2 H2O. Functionally, bifunctional enzyme with both catalase and broad-spectrum peroxidase activity. Shows peroxidase specificity towards odianisidine, ABTS and pyrogallol, but methoxyphenol and 2-chloronaphthol are not peroxidized. The sequence is that of Catalase-peroxidase 2 from Burkholderia cenocepacia (strain ATCC BAA-245 / DSM 16553 / LMG 16656 / NCTC 13227 / J2315 / CF5610) (Burkholderia cepacia (strain J2315)).